A 372-amino-acid polypeptide reads, in one-letter code: Putative 26S proteasome regulatory subunit homolog MTH_1011 (372 aa).

Residue 164 to 171 (GSPGTGKT) participates in ATP binding.

It belongs to the AAA ATPase family.

Functionally, the 26S proteasome is involved in the ATP-dependent degradation of ubiquitinated proteins. The regulatory (or ATPase) complex confers ATP dependency and substrate specificity to the 26S complex. This chain is Putative 26S proteasome regulatory subunit homolog MTH_1011, found in Methanothermobacter thermautotrophicus (strain ATCC 29096 / DSM 1053 / JCM 10044 / NBRC 100330 / Delta H) (Methanobacterium thermoautotrophicum).